A 245-amino-acid chain; its full sequence is MNVTLLIPARYGSSRFPGKPLAPINGKPMIQHVYERASLAKGLTNIYVATDDDRIKAAVEGFGGKVVMTSPEAASGTDRINDAINQLGLKDDDLVINLQGDQPLIDPTSIEQVISLFERHPGEFEMATLGFEIVNKAELDDPMHVKMVFDNNNYALYFSRSRIPFGRDTQDYPVYKHLGVYAYTRKFVQAFAALPLGRLEDLEKLEQLRALEYGHKIKIAISAFDSIEVDTPEDIRKCEQRLAVD.

The protein belongs to the KdsB family.

The protein localises to the cytoplasm. The enzyme catalyses 8-amino-3,8-dideoxy-alpha-D-manno-octulosonate + CTP = CMP-8-amino-3,8-dideoxy-alpha-D-manno-oct-2-ulosonate + diphosphate. It participates in bacterial outer membrane biogenesis; lipopolysaccharide biosynthesis. In terms of biological role, activates KDO8N (a required 8-carbon sugar) for incorporation into bacterial lipopolysaccharide in the Shewanella genus. In Shewanella baltica (strain OS223), this protein is 8-amino-3,8-dideoxy-manno-octulosonate cytidylyltransferase.